Here is a 199-residue protein sequence, read N- to C-terminus: Probable thymidylate kinase (199 aa).

An ATP-binding site is contributed by 7-14; the sequence is GLDGSGKT.

Belongs to the thymidylate kinase family.

The enzyme catalyses dTMP + ATP = dTDP + ADP. The chain is Probable thymidylate kinase from Halobacterium salinarum (strain ATCC 29341 / DSM 671 / R1).